The chain runs to 131 residues: Small ribosomal subunit protein uS11 (131 aa).

It belongs to the universal ribosomal protein uS11 family. Part of the 30S ribosomal subunit. Interacts with proteins S7 and S18. Binds to IF-3.

Functionally, located on the platform of the 30S subunit, it bridges several disparate RNA helices of the 16S rRNA. Forms part of the Shine-Dalgarno cleft in the 70S ribosome. The sequence is that of Small ribosomal subunit protein uS11 from Natranaerobius thermophilus (strain ATCC BAA-1301 / DSM 18059 / JW/NM-WN-LF).